A 296-amino-acid polypeptide reads, in one-letter code: Fructose-bisphosphate aldolase class 1 (296 aa).

Residue Glu-175 is the Proton acceptor of the active site. The Schiff-base intermediate with dihydroxyacetone-P role is filled by Lys-212.

It belongs to the class I fructose-bisphosphate aldolase family.

It carries out the reaction beta-D-fructose 1,6-bisphosphate = D-glyceraldehyde 3-phosphate + dihydroxyacetone phosphate. The protein operates within carbohydrate degradation; glycolysis; D-glyceraldehyde 3-phosphate and glycerone phosphate from D-glucose: step 4/4. This Staphylococcus haemolyticus (strain JCSC1435) protein is Fructose-bisphosphate aldolase class 1.